A 162-amino-acid chain; its full sequence is Ribosome maturation factor RimM (162 aa).

The region spanning Glu86–Leu160 is the PRC barrel domain.

Belongs to the RimM family. In terms of assembly, binds ribosomal protein uS19.

It localises to the cytoplasm. Functionally, an accessory protein needed during the final step in the assembly of 30S ribosomal subunit, possibly for assembly of the head region. Essential for efficient processing of 16S rRNA. May be needed both before and after RbfA during the maturation of 16S rRNA. It has affinity for free ribosomal 30S subunits but not for 70S ribosomes. This chain is Ribosome maturation factor RimM, found in Thermus thermophilus (strain ATCC 27634 / DSM 579 / HB8).